The chain runs to 377 residues: MRGQRSLLLGPARLCLRLLLLLGYRRRCPPLLRGLVQRWRYGKVCLRSLLYNSFGGSDTAVDAAFEPVYWLVDNVIRWFGVVFVVLVIVLTGSIVAIAYLCVLPLILRTYSVPRLCWHFFYSHWNLILIVFHYYQAITTPPGYPPQGRNDIATVSICKKCIYPKPARTHHCSICNRCVLKMDHHCPWLNNCVGHYNHRYFFSFCFFMTLGCVYCSYGSWDLFREAYAAIEKMKQLDKNKLQAVANQTYHQTPPPIFSFRERMTHKSLVYLWFLCSSVALALGALTVWHAVLISRGETSIERHINKKERRRLQAKGRVFRNPYNYGCLDNWKVFLGVDTGRHWLTRVLLPSSHLPHGNGMSWEPPPWVTAHSASVMAV.

Topologically, residues 1–77 (MRGQRSLLLG…VYWLVDNVIR (77 aa)) are cytoplasmic. The chain crosses the membrane as a helical span at residues 78 to 98 (WFGVVFVVLVIVLTGSIVAIA). Residues 99–116 (YLCVLPLILRTYSVPRLC) are Lumenal-facing. The helical transmembrane segment at 117–137 (WHFFYSHWNLILIVFHYYQAI) threads the bilayer. The Cytoplasmic portion of the chain corresponds to 138–198 (TTPPGYPPQG…NNCVGHYNHR (61 aa)). The DHHC domain maps to 155–205 (SICKKCIYPKPARTHHCSICNRCVLKMDHHCPWLNNCVGHYNHRYFFSFCF). C185 functions as the S-palmitoyl cysteine intermediate in the catalytic mechanism. Residues 199–219 (YFFSFCFFMTLGCVYCSYGSW) traverse the membrane as a helical segment. Residues 220 to 266 (DLFREAYAAIEKMKQLDKNKLQAVANQTYHQTPPPIFSFRERMTHKS) lie on the Lumenal side of the membrane. A helical transmembrane segment spans residues 267 to 287 (LVYLWFLCSSVALALGALTVW). Residues 288–377 (HAVLISRGET…TAHSASVMAV (90 aa)) are Cytoplasmic-facing.

It belongs to the DHHC palmitoyltransferase family. As to quaternary structure, interacts with ABL1. Interacts with COPS5/JAB1.

Its subcellular location is the endoplasmic reticulum membrane. It carries out the reaction L-cysteinyl-[protein] + hexadecanoyl-CoA = S-hexadecanoyl-L-cysteinyl-[protein] + CoA. Its function is as follows. Palmitoyl acyltransferase that mediates palmitoylation of proteins such as PLN and ZDHHC6. Required during embryonic heart development and cardiac function, possibly by mediating palmitoylation of PLN, thereby affecting PLN phosphorylation and homooligomerization. Also required for eye development. Palmitoylates ZDHHC6, affecting the quaternary assembly of ZDHHC6, its localization, stability and function. May play a role in DNA damage response. May be involved in apoptosis regulation. Involved in the proliferation of neural stem cells by regulating the FGF/ERK pathway. This is Palmitoyltransferase ZDHHC16 from Macaca fascicularis (Crab-eating macaque).